The chain runs to 119 residues: Neuropeptide B (119 aa).

The first 21 residues, 1–21 (MVRCRTLVAAALALLLTPALA), serve as a signal peptide directing secretion. A propeptide spanning residues 53-119 (SESPALRVGT…SLHKAECQSA (67 aa)) is cleaved from the precursor.

The protein belongs to the neuropeptide B/W family. In terms of tissue distribution, detected in a variety of tissues. High levels are found in the lymphoid organs, central nervous system, mammary gland and uterus.

It is found in the secreted. Its function is as follows. May be involved in the regulation of feeding, neuroendocrine system, memory and learning. May be involved in the afferent pain pathway. The protein is Neuropeptide B (Npb) of Rattus norvegicus (Rat).